A 364-amino-acid chain; its full sequence is Ribosomal RNA small subunit methyltransferase H (364 aa).

Residues 55–57 (GGH), Asp-75, Phe-101, Asp-122, and Gln-129 contribute to the S-adenosyl-L-methionine site. The interval 333-364 (LPPGGGAGFVKAGRVPGEPVRGTRAGSKGRRR) is disordered.

The protein belongs to the methyltransferase superfamily. RsmH family.

Its subcellular location is the cytoplasm. The enzyme catalyses cytidine(1402) in 16S rRNA + S-adenosyl-L-methionine = N(4)-methylcytidine(1402) in 16S rRNA + S-adenosyl-L-homocysteine + H(+). Specifically methylates the N4 position of cytidine in position 1402 (C1402) of 16S rRNA. The protein is Ribosomal RNA small subunit methyltransferase H of Bordetella bronchiseptica (strain ATCC BAA-588 / NCTC 13252 / RB50) (Alcaligenes bronchisepticus).